The sequence spans 333 residues: Fibronectin type III domain-containing protein 11 (333 aa).

A Fibronectin type-III domain is found at 212–310 (PVMFDRKESV…DSLTLHTRPG (99 aa)). A disordered region spans residues 307–333 (TRPGPPEGLAPSRLGKLGLSLTTPSER).

The protein is Fibronectin type III domain-containing protein 11 of Bos taurus (Bovine).